Consider the following 247-residue polypeptide: Ribosomal RNA small subunit methyltransferase J (247 aa).

Residues 106–107 (RD), 122–123 (ER), and Asp168 contribute to the S-adenosyl-L-methionine site.

Belongs to the methyltransferase superfamily. RsmJ family.

Its subcellular location is the cytoplasm. The enzyme catalyses guanosine(1516) in 16S rRNA + S-adenosyl-L-methionine = N(2)-methylguanosine(1516) in 16S rRNA + S-adenosyl-L-homocysteine + H(+). Its function is as follows. Specifically methylates the guanosine in position 1516 of 16S rRNA. The chain is Ribosomal RNA small subunit methyltransferase J from Alcanivorax borkumensis (strain ATCC 700651 / DSM 11573 / NCIMB 13689 / SK2).